The primary structure comprises 326 residues: Beta-ketoacyl-[acyl-carrier-protein] synthase III (326 aa).

Residues cysteine 112 and histidine 251 contribute to the active site. The tract at residues 252 to 256 (QANSR) is ACP-binding. Asparagine 281 is a catalytic residue.

It belongs to the thiolase-like superfamily. FabH family. As to quaternary structure, homodimer.

It localises to the cytoplasm. It carries out the reaction malonyl-[ACP] + acetyl-CoA + H(+) = 3-oxobutanoyl-[ACP] + CO2 + CoA. It functions in the pathway lipid metabolism; fatty acid biosynthesis. Its function is as follows. Catalyzes the condensation reaction of fatty acid synthesis by the addition to an acyl acceptor of two carbons from malonyl-ACP. Catalyzes the first condensation reaction which initiates fatty acid synthesis and may therefore play a role in governing the total rate of fatty acid production. Possesses both acetoacetyl-ACP synthase and acetyl transacylase activities. Its substrate specificity determines the biosynthesis of branched-chain and/or straight-chain of fatty acids. The sequence is that of Beta-ketoacyl-[acyl-carrier-protein] synthase III from Clostridium botulinum (strain Langeland / NCTC 10281 / Type F).